The primary structure comprises 342 residues: Leucine-rich repeat-containing protein 23 (342 aa).

The span at 1–30 shows a compositional bias: acidic residues; that stretch reads MSDEDDLEDFETDQDDLEREDDEKETEEWE. Residues 1–42 are disordered; sequence MSDEDDLEDFETDQDDLEREDDEKETEEWEDYRKEGEESEDW. Residues 3–27 are a coiled coil; sequence DEDDLEDFETDQDDLEREDDEKETE. LRR repeat units lie at residues 91–112, 113–133, 134–154, 155–176, 179–199, 200–221, 222–243, and 245–266; these read HLRY…NHLT, NLLW…NELP, YLQI…ISHP, RLAS…DPQK, SLHT…INLP, KLKN…ENLS, NLTT…SKEM, and SLQY…AKLR. Residues 207-342 form an interaction with RSPH9 region; sequence AQNMLKKVEG…PESELDQSST (136 aa). Residues 279–317 enclose the LRRCT domain; it reads NPCTDENDYRQEALVQIAHLERLDKEFYEEEERAEADEI. A coiled-coil region spans residues 306 to 332; it reads YEEEERAEADEIRQRMKEEQEQEAEVE. A disordered region spans residues 307-342; sequence EEEERAEADEIRQRMKEEQEQEAEVEPESELDQSST. A compositionally biased stretch (basic and acidic residues) spans 314–324; sequence ADEIRQRMKEE. A compositionally biased stretch (acidic residues) spans 325–342; it reads QEQEAEVEPESELDQSST.

In terms of assembly, component of the axonemal radial spoke complex. Interacts with RSPH3. Interacts with RSPH9.

The protein localises to the cytoplasm. Its subcellular location is the cytoskeleton. It is found in the flagellum axoneme. Essential for sperm motility and male fertility. Plays an important role in the proper assembly of the third radial spoke (RS3) head and the bridge structure between RS2 and RS3 in the sperm flagella. This chain is Leucine-rich repeat-containing protein 23 (LRRC23), found in Bos taurus (Bovine).